Here is a 345-residue protein sequence, read N- to C-terminus: Photosystem II protein D1 (345 aa).

3 helical membrane passes run Y30–T47, H119–L134, and W143–A157. Residue H119 participates in chlorophyll a binding. Y127 contributes to the pheophytin a binding site. 2 residues coordinate [CaMn4O5] cluster: D171 and E190. Residues F198–L219 form a helical membrane-spanning segment. H199 contacts chlorophyll a. Residues H216 and S265 to F266 contribute to the a quinone site. H216 provides a ligand contact to Fe cation. H273 is a Fe cation binding site. A helical transmembrane segment spans residues F275–L289. [CaMn4O5] cluster contacts are provided by H333, E334, D343, and A345.

It belongs to the reaction center PufL/M/PsbA/D family. In terms of assembly, PSII is composed of 1 copy each of membrane proteins PsbA, PsbB, PsbC, PsbD, PsbE, PsbF, PsbH, PsbI, PsbJ, PsbK, PsbL, PsbM, PsbT, PsbY, PsbZ, Psb30/Ycf12, at least 3 peripheral proteins of the oxygen-evolving complex and a large number of cofactors. It forms dimeric complexes. The D1/D2 heterodimer binds P680, chlorophylls that are the primary electron donor of PSII, and subsequent electron acceptors. It shares a non-heme iron and each subunit binds pheophytin, quinone, additional chlorophylls, carotenoids and lipids. D1 provides most of the ligands for the Mn4-Ca-O5 cluster of the oxygen-evolving complex (OEC). There is also a Cl(-1) ion associated with D1 and D2, which is required for oxygen evolution. The PSII complex binds additional chlorophylls, carotenoids and specific lipids. serves as cofactor. In terms of processing, tyr-162 forms a radical intermediate that is referred to as redox-active TyrZ, YZ or Y-Z.

The protein localises to the plastid. Its subcellular location is the chloroplast thylakoid membrane. It carries out the reaction 2 a plastoquinone + 4 hnu + 2 H2O = 2 a plastoquinol + O2. Functionally, photosystem II (PSII) is a light-driven water:plastoquinone oxidoreductase that uses light energy to abstract electrons from H(2)O, generating O(2) and a proton gradient subsequently used for ATP formation. It consists of a core antenna complex that captures photons, and an electron transfer chain that converts photonic excitation into a charge separation. The D1/D2 (PsbA/PsbD) reaction center heterodimer binds P680, the primary electron donor of PSII as well as several subsequent electron acceptors. In Euglena gracilis, this protein is Photosystem II protein D1.